A 334-amino-acid polypeptide reads, in one-letter code: Tetratricopeptide repeat protein 24 (334 aa).

TPR repeat units follow at residues 35–68 (GPFYNDLGMGYFQLQLFPLAVEAFLQALPLCRQP), 72–105 (ATVLQNLGMTHNVLGNYWEAQEFHQKAASLHGSV), 112–145 (GRSFSGLAFSLSQLGDHRAAWDSYLHALQAAQDT), and 152–185 (WQACEGLGAAAARLGQHDQALKYYKEALALCQHE). Positions 220–258 (PGKLQTSRKAKTSARVQSSAEDAQESQWEGEASEGGHEK) are disordered. Residues 233-246 (ARVQSSAEDAQESQ) show a composition bias toward polar residues.

The chain is Tetratricopeptide repeat protein 24 (Ttc24) from Mus musculus (Mouse).